The primary structure comprises 387 residues: Ferrochelatase (387 aa).

Positions 196 and 277 each coordinate Fe cation.

The protein belongs to the ferrochelatase family.

The protein resides in the cytoplasm. The catalysed reaction is heme b + 2 H(+) = protoporphyrin IX + Fe(2+). The protein operates within porphyrin-containing compound metabolism; protoheme biosynthesis; protoheme from protoporphyrin-IX: step 1/1. Catalyzes the ferrous insertion into protoporphyrin IX. The chain is Ferrochelatase from Gloeothece citriformis (strain PCC 7424) (Cyanothece sp. (strain PCC 7424)).